A 392-amino-acid chain; its full sequence is Chalcone synthase-like protein 1 (392 aa).

Cysteine 166 is an active-site residue.

This sequence belongs to the thiolase-like superfamily. Chalcone/stilbene synthases family. Expressed at the same level in leaves and in glandular trichomes.

Its subcellular location is the cytoplasm. Functionally, chalcone synthase that may use malonyl-CoA and hexanoyl-CoA as substrates but without producing olivetol or olivetolic acid. The protein is Chalcone synthase-like protein 1 (CAN383) of Cannabis sativa (Hemp).